Consider the following 338-residue polypeptide: Anthranilate phosphoribosyltransferase (338 aa).

Residues Gly80, Gly83–Asp84, Thr88, Asn90–Thr93, Lys108–Ser116, and Ser120 contribute to the 5-phospho-alpha-D-ribose 1-diphosphate site. Gly80 lines the anthranilate pocket. Mg(2+) is bound at residue Ser92. Asn111 contributes to the anthranilate binding site. Anthranilate is bound at residue Arg166. Mg(2+) is bound by residues Asp225 and Glu226.

This sequence belongs to the anthranilate phosphoribosyltransferase family. In terms of assembly, homodimer. Mg(2+) is required as a cofactor.

It carries out the reaction N-(5-phospho-beta-D-ribosyl)anthranilate + diphosphate = 5-phospho-alpha-D-ribose 1-diphosphate + anthranilate. It participates in amino-acid biosynthesis; L-tryptophan biosynthesis; L-tryptophan from chorismate: step 2/5. Catalyzes the transfer of the phosphoribosyl group of 5-phosphorylribose-1-pyrophosphate (PRPP) to anthranilate to yield N-(5'-phosphoribosyl)-anthranilate (PRA). This Desulfatibacillum aliphaticivorans protein is Anthranilate phosphoribosyltransferase.